The sequence spans 1447 residues: Bud site selection protein 4 (1447 aa).

Basic and acidic residues predominate over residues 1-16; it reads MHDAESTVDSLLKEID. Disordered stretches follow at residues 1–38 and 57–76; these read MHDAESTVDSLLKEIDNEMEQTKSNITQNGSEDTPHNW and NTRSNATENSRGRSPSKMST. At Ser10 the chain carries Phosphoserine. Polar residues-rich tracts occupy residues 22-32 and 59-76; these read TKSNITQNGSE and RSNATENSRGRSPSKMST. 5 positions are modified to phosphoserine: Ser78, Ser81, Ser91, Ser96, and Ser167. Residues 272-316 are disordered; that stretch reads NLPSKLLNTSNNSHSDSRSPTASVEDLNISTNLPGADSSQNNPVT. The span at 277 to 316 shows a compositional bias: polar residues; that stretch reads LLNTSNNSHSDSRSPTASVEDLNISTNLPGADSSQNNPVT. The residue at position 365 (Thr365) is a Phosphothreonine. Ser367 bears the Phosphoserine mark. The interval 444-479 is disordered; sequence HQESEHANEQPAIIPQKDSSEETFTELNNESEFQRN. Ser511 bears the Phosphoserine mark. Residues 529–591 form a disordered region; that stretch reads KTSAEEHDLS…NEEPEHVPLL (63 aa). Positions 538–548 are enriched in polar residues; sequence SSSCEDQSVSE. Residues 549-580 are compositionally biased toward basic and acidic residues; sequence ARNKDRIEEKEVETKDENIETEKDESEYHKVE. Phosphoserine is present on Ser616. Polar residues predominate over residues 648 to 664; sequence ANSQFSQQSSITTASTV. The segment at 648–673 is disordered; sequence ANSQFSQQSSITTASTVDSKKDNGST. Residues 768–879 form an interaction with IQG1 region; sequence EHENIPLSTH…SLWESSYELK (112 aa). 2 positions are modified to phosphoserine: Ser805 and Ser811. A PH domain is found at 1302–1413; it reads NIYKEGYLLQ…WYNKLQEVVE (112 aa).

Interacts with AXL1, AXL2, IQG1 and SEC3. In terms of processing, phosphorylated by CDC28.

Its subcellular location is the bud neck. Required for establishment of the axial budding pattern in haploid cells. Cooperates with other bud site selection proteins to recognize a spatial landmark during mitosis and they subsequently become a landmark for downstream polarity establishment factors that coordinate axial budding and cytokinesis. Involved in the septin organization at the bud neck. This chain is Bud site selection protein 4 (BUD4), found in Saccharomyces cerevisiae (strain ATCC 204508 / S288c) (Baker's yeast).